The sequence spans 638 residues: Epithelial sodium channel subunit beta (638 aa).

Topologically, residues Met1–Ala50 are cytoplasmic. A helical transmembrane segment spans residues Met51 to Ile71. The Extracellular segment spans residues Gln72–Gly530. 9 disulfide bridges follow: Cys98/Cys270, Cys182/Cys187, Cys194/Cys201, Cys247/Cys254, Cys359/Cys446, Cys384/Cys442, Cys388/Cys438, Cys397/Cys424, and Cys399/Cys413. N-linked (GlcNAc...) asparagine glycans are attached at residues Asn135 and Asn141. Residues Ser531 to Ile551 traverse the membrane as a helical segment. Residues Lys552–Ile638 are Cytoplasmic-facing. The interval Asn598–Ser620 is disordered. The PY motif; recruits WW domain-containing proteins and is thereby required for ubiquitination and inhibition of the channel by NEDD4 and NEDD4L signature appears at Pro614 to Tyr618. 2 positions are modified to phosphoserine: Ser631 and Ser633.

Belongs to the amiloride-sensitive sodium channel (TC 1.A.6) family. SCNN1B subfamily. In terms of assembly, component of the heterotrimeric epithelial sodium channel (ENaC) composed of an alpha/SCNN1A, a beta/SCNN1B and a gamma/SCNN1G subunit. Interacts with WWP1 (via WW domains). Interacts with WWP2 (via WW domains). Interacts with the full-length immature form of PCSK9 (pro-PCSK9). Interacts (N-glycosylated) with BPIFA1; the interaction is direct and inhibits the proteolytic processing of SCNN1A and SCNN1G and the activation of ENaC. Post-translationally, ubiquitinated. Can be ubiquitinated at multiple sites and undergo monoubiquitination and polyubiquitination. Ubiquitination by NEDD4 or NEDD4L inhibits the ENaC channel through endocytosis, intracellular retention and degradation of its individual subunits. However, some studies could not confirm the ubiquitination of this subunit of the ENaC. N-glycosylated. N-glycosylation is required for interaction with BPIFA1. In terms of processing, phosphorylated on serine and threonine residues. Aldosterone and insulin increase the basal level of phosphorylation. Expressed in lung and epididymis. In the caput region of the epididymis, expressed at the luminal and basolateral surfaces of the ducts and in the smooth muscle coat. In the caudal region of the epididymis, expressed along the luminal border but not continuously, in the smooth muscle coat, in the interstitial muscle tissue and in sperm in the caudal lumen.

The protein resides in the apical cell membrane. The protein localises to the cytoplasmic vesicle membrane. It catalyses the reaction Na(+)(in) = Na(+)(out). Its activity is regulated as follows. Originally identified and characterized by its inhibition by the diuretic drug amiloride. Functionally, this is one of the three pore-forming subunits of the heterotrimeric epithelial sodium channel (ENaC), a critical regulator of sodium balance and fluid homeostasis. ENaC operates in epithelial tissues, where it mediates the electrodiffusion of sodium ions from extracellular fluid through the apical membrane of cells, with water following osmotically. It plays a key role in maintaining sodium homeostasis through electrogenic sodium reabsorption in the kidneys. This subunit is not essential for ENaC function in airway surface liquid homeostasis and proper mucus clearance. The protein is Epithelial sodium channel subunit beta of Rattus norvegicus (Rat).